A 310-amino-acid polypeptide reads, in one-letter code: Homoserine kinase (310 aa).

95–105 serves as a coordination point for ATP; sequence PQSRGLGSSAA.

It belongs to the GHMP kinase family. Homoserine kinase subfamily.

The protein localises to the cytoplasm. It catalyses the reaction L-homoserine + ATP = O-phospho-L-homoserine + ADP + H(+). The protein operates within amino-acid biosynthesis; L-threonine biosynthesis; L-threonine from L-aspartate: step 4/5. In terms of biological role, catalyzes the ATP-dependent phosphorylation of L-homoserine to L-homoserine phosphate. This chain is Homoserine kinase, found in Corynebacterium kroppenstedtii (strain DSM 44385 / JCM 11950 / CIP 105744 / CCUG 35717).